Reading from the N-terminus, the 823-residue chain is Protein Shroom1 (823 aa).

At Met1 the chain carries N-acetylmethionine. 3 disordered regions span residues 1-55 (MEAL…TERL), 72-110 (PTSK…LNRQ), and 124-159 (ATAH…TSFQ). Composition is skewed to polar residues over residues 28 to 50 (RADS…TPSP) and 72 to 85 (PTSK…TQRP). Ser103, Ser133, Ser137, Ser166, Ser190, and Ser224 each carry phosphoserine. One can recognise an ASD1 domain in the interval 145–233 (LQGAQRRVLR…SEPGKLHRVG (89 aa)). The segment at 181-200 (TAHVRSASSSQELGEEEPAR) is disordered. Disordered regions lie at residues 270 to 303 (SSTE…GPCK) and 349 to 375 (QTKP…PEDD). Residue Thr383 is modified to Phosphothreonine. Ser385 carries the phosphoserine modification. 2 disordered regions span residues 420-503 (LHET…LTWG) and 566-620 (EMGE…STQA). 3 stretches are compositionally biased toward polar residues: residues 444-468 (RPTS…TDPS), 489-503 (SETP…LTWG), and 586-620 (QDLQ…STQA). In terms of domain architecture, ASD2 spans 517 to 796 (EALVQELARL…QLDTIWSDLS (280 aa)).

The protein belongs to the shroom family. Interacts with F-actin.

The protein localises to the cytoplasm. It localises to the cytoskeleton. Its function is as follows. May be involved in the assembly of microtubule arrays during cell elongation. In Mus musculus (Mouse), this protein is Protein Shroom1 (Shroom1).